A 554-amino-acid chain; its full sequence is Endochitinase (554 aa).

The signal sequence occupies residues 1 to 19 (MRATLATLAVLALATAVQS). The region spanning 23–398 (ARIVCYFSNW…KILHKHMSSY (376 aa)) is the GH18 domain. A disulfide bridge connects residues cysteine 27 and cysteine 52. Residue 76 to 77 (LD) participates in chitin binding. Asparagine 85 carries N-linked (GlcNAc...) asparagine glycosylation. 103–106 (GGWA) is a chitin binding site. The active-site Proton donor is glutamate 146. Chitin-binding positions include tyrosine 147 and 213–216 (MSYD). Asparagine 303 carries N-linked (GlcNAc...) asparagine glycosylation. Tryptophan 370 serves as a coordination point for chitin. The tract at residues 398–494 (YTVPPPHTEN…VPPTENEVDG (97 aa)) is disordered. The segment covering 431–457 (PTTTTAKPASTTKTTVKTTTTTTAKPP) has biased composition (low complexity). Positions 467 to 477 (INVRPEPKPEP) are enriched in basic and acidic residues. The 59-residue stretch at 495–553 (SEICNSDQDYIPDKKHCDKYWRCVNGEAMQFSCQHGTVFNVELNVCDWPSNATRRECQQ) folds into the Chitin-binding type-2 domain. An intrachain disulfide couples cysteine 527 to cysteine 540. Asparagine 545 carries N-linked (GlcNAc...) asparagine glycosylation.

Belongs to the glycosyl hydrolase 18 family. Chitinase class II subfamily. In terms of tissue distribution, epidermis and gut.

Its subcellular location is the secreted. The catalysed reaction is Random endo-hydrolysis of N-acetyl-beta-D-glucosaminide (1-&gt;4)-beta-linkages in chitin and chitodextrins.. Digests chitin in the exoskeleton during the molting process. In Manduca sexta (Tobacco hawkmoth), this protein is Endochitinase.